We begin with the raw amino-acid sequence, 507 residues long: Alpha-amylase 2 (507 aa).

The N-terminal stretch at 1 to 20 (MKFATILSTTALALSSLVAS) is a signal peptide. Residues Cys-62 and Cys-70 are joined by a disulfide bond. A substrate-binding site is contributed by Trp-115. Asn-153 is a binding site for Ca(2+). Residue His-154 coordinates substrate. Cys-182 and Cys-196 are oxidised to a cystine. Ca(2+) is bound by residues Glu-194 and Asp-207. N-linked (GlcNAc...) asparagine glycosylation occurs at Asn-229. Residue Arg-236 coordinates substrate. Ca(2+)-binding residues include Asp-238, His-242, and Glu-262. Catalysis depends on Asp-238, which acts as the Nucleophile. 241-242 (KH) is a substrate binding site. Glu-262 serves as the catalytic Proton donor. Position 266 (Gly-266) interacts with substrate. Cysteines 272 and 315 form a disulfide. Positions 329 and 376 each coordinate substrate. Residues Cys-470 and Cys-505 are joined by a disulfide bond.

Belongs to the glycosyl hydrolase 13 family. Requires Ca(2+) as cofactor.

The catalysed reaction is Endohydrolysis of (1-&gt;4)-alpha-D-glucosidic linkages in polysaccharides containing three or more (1-&gt;4)-alpha-linked D-glucose units.. The polypeptide is Alpha-amylase 2 (SWA2) (Schwanniomyces occidentalis (Yeast)).